An 842-amino-acid polypeptide reads, in one-letter code: Leucine--tRNA ligase (842 aa).

The 'HIGH' region signature appears at 44–55 (PYPSANGLHVGH). A 'KMSKS' region motif is present at residues 619 to 623 (KMSKS). K622 contacts ATP.

This sequence belongs to the class-I aminoacyl-tRNA synthetase family.

It localises to the cytoplasm. The enzyme catalyses tRNA(Leu) + L-leucine + ATP = L-leucyl-tRNA(Leu) + AMP + diphosphate. The polypeptide is Leucine--tRNA ligase (Borrelia duttonii (strain Ly)).